The following is a 206-amino-acid chain: Orotate phosphoribosyltransferase (206 aa).

5-phospho-alpha-D-ribose 1-diphosphate-binding positions include arginine 97, lysine 98, lysine 101, and 125 to 133 (NDVIASGRS). Position 157 (arginine 157) interacts with orotate.

It belongs to the purine/pyrimidine phosphoribosyltransferase family. PyrE subfamily. As to quaternary structure, homodimer. It depends on Mg(2+) as a cofactor.

It carries out the reaction orotidine 5'-phosphate + diphosphate = orotate + 5-phospho-alpha-D-ribose 1-diphosphate. It functions in the pathway pyrimidine metabolism; UMP biosynthesis via de novo pathway; UMP from orotate: step 1/2. In terms of biological role, catalyzes the transfer of a ribosyl phosphate group from 5-phosphoribose 1-diphosphate to orotate, leading to the formation of orotidine monophosphate (OMP). This chain is Orotate phosphoribosyltransferase, found in Chlamydia felis (strain Fe/C-56) (Chlamydophila felis).